A 394-amino-acid polypeptide reads, in one-letter code: Cytochrome b (394 aa).

A run of 4 helical transmembrane segments spans residues 39-59 (FGSL…FLAM), 83-105 (WLLR…LHTF), 120-140 (VWCL…IGYV), and 186-206 (FFSL…LHLA). Residues H89 and H103 each coordinate heme b. Residues H191 and H204 each coordinate heme b. H209 is an a ubiquinone binding site. A run of 4 helical transmembrane segments spans residues 232-252 (FYVK…IWIF), 296-316 (AGGV…PFFK), 328-348 (IYQG…WIGC), and 355-374 (FVTI…AITP).

This sequence belongs to the cytochrome b family. As to quaternary structure, the main subunits of complex b-c1 are: cytochrome b, cytochrome c1 and the Rieske protein. It depends on heme b as a cofactor.

The protein resides in the mitochondrion inner membrane. Its function is as follows. Component of the ubiquinol-cytochrome c reductase complex (complex III or cytochrome b-c1 complex) that is part of the mitochondrial respiratory chain. The b-c1 complex mediates electron transfer from ubiquinol to cytochrome c. Contributes to the generation of a proton gradient across the mitochondrial membrane that is then used for ATP synthesis. The chain is Cytochrome b (MT-CYB) from Oenothera berteroana (Bertero's evening primrose).